Reading from the N-terminus, the 447-residue chain is Ribosomal protein uS12 methylthiotransferase RimO (447 aa).

Residues 4–114 (PKVGFVSLGC…VMEAVHEYVP (111 aa)) form the MTTase N-terminal domain. Residues Cys13, Cys49, Cys78, Cys147, Cys151, and Cys154 each coordinate [4Fe-4S] cluster. The Radical SAM core domain occupies 133 to 370 (LTPKHYAYLK…MQVQQEISAA (238 aa)). The TRAM domain maps to 373-443 (QKRIGQTMTV…EYDLFAKLIQ (71 aa)).

The protein belongs to the methylthiotransferase family. RimO subfamily. Requires [4Fe-4S] cluster as cofactor.

Its subcellular location is the cytoplasm. The enzyme catalyses L-aspartate(89)-[ribosomal protein uS12]-hydrogen + (sulfur carrier)-SH + AH2 + 2 S-adenosyl-L-methionine = 3-methylsulfanyl-L-aspartate(89)-[ribosomal protein uS12]-hydrogen + (sulfur carrier)-H + 5'-deoxyadenosine + L-methionine + A + S-adenosyl-L-homocysteine + 2 H(+). In terms of biological role, catalyzes the methylthiolation of an aspartic acid residue of ribosomal protein uS12. This is Ribosomal protein uS12 methylthiotransferase RimO from Acinetobacter baylyi (strain ATCC 33305 / BD413 / ADP1).